The following is a 97-amino-acid chain: ESAT-6-like protein EsxA (97 aa).

It belongs to the WXG100 family. ESAT-6 subfamily. As to quaternary structure, forms a tight 1:1 complex with EsxB. Forms a complex with EccC and EsxB, probably wholly mediated by EsxB.

It localises to the secreted. Functionally, may help regulate assembly and function of the type VII secretion system (T7SS). EsxA disassembles pre-formed EccC-EsxB multimers, possibly by making EccC-EsxA-EsxB trimers instead of EccC-EsxB-EsxB-EccC tetramers. The protein is ESAT-6-like protein EsxA of Thermomonospora curvata (strain ATCC 19995 / DSM 43183 / JCM 3096 / KCTC 9072 / NBRC 15933 / NCIMB 10081 / Henssen B9).